A 212-amino-acid polypeptide reads, in one-letter code: Ribosomal RNA small subunit methyltransferase G (212 aa).

S-adenosyl-L-methionine-binding positions include Gly72, Leu77, 123–124, and Arg138; that span reads VE.

It belongs to the methyltransferase superfamily. RNA methyltransferase RsmG family.

The protein localises to the cytoplasm. The catalysed reaction is guanosine(527) in 16S rRNA + S-adenosyl-L-methionine = N(7)-methylguanosine(527) in 16S rRNA + S-adenosyl-L-homocysteine. Functionally, specifically methylates the N7 position of guanine in position 527 of 16S rRNA. The polypeptide is Ribosomal RNA small subunit methyltransferase G (Histophilus somni (strain 2336) (Haemophilus somnus)).